We begin with the raw amino-acid sequence, 653 residues long: Protein fem-1 homolog A (653 aa).

ANK repeat units lie at residues aspartate 2–leucine 31, serine 40–alanine 70, glutamate 82–arginine 111, threonine 115–valine 145, histidine 149–arginine 178, lysine 182–arginine 211, and tyrosine 214–glutamate 243. Serine 108 is subject to Phosphoserine. Residues aspartate 242–cysteine 274 are disordered. 2 TPR repeats span residues valine 282–glycine 316 and serine 374–asparagine 407. ANK repeat units lie at residues asparagine 518 to serine 560 and aspartate 564 to alanine 593.

Belongs to the fem-1 family. In terms of assembly, component of a CRL2 E3 ubiquitin-protein ligase complex, also named ECS (Elongin BC-CUL2/5-SOCS-box protein) complex, composed of CUL2, Elongin BC (ELOB and ELOC), RBX1 and substrate-specific adapter FEM1A. Interacts with PTGER4. Interacts with NFKB1; the interaction is direct. In terms of processing, phosphorylated; highly phosphorylated in myoblasts and myotubes. Phosphorylation at Ser-108 promotes PGE2-EP4-mediated inhibition of inflammation. Dephosphorylated by protein phosphatase 2A (PP2A).

It is found in the mitochondrion. The protein localises to the cytoplasm. The protein operates within protein modification; protein ubiquitination. Its function is as follows. Substrate-recognition component of a Cul2-RING (CRL2) E3 ubiquitin-protein ligase complex of the DesCEND (destruction via C-end degrons) pathway, which recognizes a C-degron located at the extreme C terminus of target proteins, leading to their ubiquitination and degradation. The C-degron recognized by the DesCEND pathway is usually a motif of less than ten residues and can be present in full-length proteins, truncated proteins or proteolytically cleaved forms. The CRL2(FEM1A) complex specifically recognizes proteins with an arginine at the C-terminus: recognizes and binds proteins ending with -Lys/Arg-Xaa-Arg and -Lys/Arg-Xaa-Xaa-Arg C-degrons, such as SIL1 or OR51B2, leading to their ubiquitination and degradation. Involved in PGE2-EP4-mediated inhibition of inflammation of macrophages via interaction with NFKB1 and PTGER4. Promotes inflammation in brain microglia through MAP2K4/MKK4-mediated signaling. This chain is Protein fem-1 homolog A, found in Bos taurus (Bovine).